Consider the following 300-residue polypeptide: Nucleotide-binding protein Dshi_0209 (300 aa).

20-27 (GPSGAGRT) provides a ligand contact to ATP. 67 to 70 (DART) provides a ligand contact to GTP.

This sequence belongs to the RapZ-like family.

Displays ATPase and GTPase activities. This is Nucleotide-binding protein Dshi_0209 from Dinoroseobacter shibae (strain DSM 16493 / NCIMB 14021 / DFL 12).